The sequence spans 106 residues: Transcriptional and immune response regulator (106 aa).

Monomer. Interacts with NOTCH2 (via ANK repeats), the interaction inhibits the nuclear translocation of NOTCH2 N2ICD. Interacts (C-terminus) with CBY1 (C-terminus), TCIM competes with CTNNB1 for the interaction with CBY1.

It localises to the cytoplasm. The protein localises to the nucleus. The protein resides in the nucleolus. Its subcellular location is the nucleus speckle. In terms of biological role, seems to be involved in the regulation of cell growth an differentiation, may play different and opposite roles depending on the tissue or cell type. May enhance the WNT-CTNNB1 pathway by relieving antagonistic activity of CBY1. Enhances the proliferation of follicular dendritic cells. Plays a role in the mitogen-activated MAPK2/3 signaling pathway, positively regulates G1-to-S-phase transition of the cell cycle. In endothelial cells, enhances key inflammatory mediators and inflammatory response through the modulation of NF-kappaB transcriptional regulatory activity. Involved in the regulation of heat shock response, seems to play a positive feedback with HSF1 to modulate heat-shock downstream gene expression. Plays a role in the regulation of hematopoiesis even if the mechanisms are unknown. In cancers such as thyroid or lung cancer, it has been described as promoter of cell proliferation, G1-to-S-phase transition and inhibitor of apoptosis. However, it negatively regulates self-renewal of liver cancer cells via suppresion of NOTCH2 signaling. This is Transcriptional and immune response regulator (TCIM) from Bos taurus (Bovine).